A 37-amino-acid chain; its full sequence is Hemocyanin subunit B (37 aa).

Belongs to the tyrosinase family. Hemocyanin subfamily. As to expression, hemolymph.

The protein resides in the secreted. It is found in the extracellular space. Functionally, hemocyanins are copper-containing oxygen carriers occurring freely dissolved in the hemolymph of many mollusks and arthropods. The protein is Hemocyanin subunit B of Cancer pagurus (Rock crab).